The chain runs to 366 residues: Caffeic acid 3-O-methyltransferase (366 aa).

Methionine 131–leucine 137 lines the substrate pocket. The segment at alanine 163–methionine 181 is substrate binding. Residues glycine 209, aspartate 232, aspartate 252, methionine 253, and lysine 266 each contribute to the S-adenosyl-L-methionine site. The Proton acceptor role is filled by histidine 270.

The protein belongs to the class I-like SAM-binding methyltransferase superfamily. Cation-independent O-methyltransferase family. COMT subfamily. In terms of assembly, homodimer.

The enzyme catalyses (E)-caffeate + S-adenosyl-L-methionine = (E)-ferulate + S-adenosyl-L-homocysteine + H(+). It functions in the pathway aromatic compound metabolism; phenylpropanoid biosynthesis. Its function is as follows. Catalyzes the conversion of caffeic acid to ferulic acid and of 5-hydroxyferulic acid to sinapic acid. The resulting products may subsequently be converted to the corresponding alcohols that are incorporated into lignins. The protein is Caffeic acid 3-O-methyltransferase (OMT) of Eucalyptus gunnii (Cider gum).